A 324-amino-acid chain; its full sequence is Annexin A10 (324 aa).

Annexin repeat units follow at residues 17–88 (FNPI…GLMY), 89–160 (PPPL…NLVQ), 171–243 (AMAA…AIVL), and 247–318 (DKPA…AICA).

The protein belongs to the annexin family.

The chain is Annexin A10 (ANXA10) from Homo sapiens (Human).